A 267-amino-acid polypeptide reads, in one-letter code: MAAKIFCLIMLLGLSASAATASIFPQCSQAPIASLLPPYLSPAMSSVCENPILLPYRIQQAIAAGILPLSPLFLQQSSALLQQLPLVHLLAQNIRAQQLQQLVLANLAAYSQQQQLPLVHLLAQNIRAQQLQQLVLANLAAYSQQQQFLPFNQLAALNSAAYLQQQQLLPFSQLAAAYPRQFLPFNQLAALNSHAYVQQQQLLPFSQLAAVSPAAFLTQQHLLPFYLHTAPNVGTLLQLQQLLPFDQLALTNPAVFYQQPIIGGALF.

Positions 1-21 (MAAKIFCLIMLLGLSASAATA) are cleaved as a signal peptide.

This sequence belongs to the zein family.

Its function is as follows. Zeins are major seed storage proteins. This is Zein-alpha Z4 from Zea mays (Maize).